The primary structure comprises 601 residues: Peptide transporter PTR2 (601 aa).

Positions 1–10 are enriched in polar residues; it reads MLNHPSQGSD. Positions 1–66 are disordered; the sequence is MLNHPSQGSD…DEDFEGPTEE (66 aa). At 1–150 the chain is on the extracellular side; sequence MLNHPSQGSD…PVFGGYVADT (150 aa). Over residues 14-28 the composition is skewed to basic and acidic residues; sequence DEKQGDFPVIEEEKT. Phosphotyrosine is present on tyrosine 37. Residues serine 39 and serine 45 each carry the phosphoserine modification. Over residues 42–53 the composition is skewed to polar residues; that stretch reads VANSTERYNLSP. Acidic residues predominate over residues 55 to 66; that stretch reads PEDEDFEGPTEE. Residues 151–172 form a helical membrane-spanning segment; it reads FWGKYNTICCGTAIYIAGIFIL. The Cytoplasmic portion of the chain corresponds to 173-182; it reads FITSIPSVGN. A helical membrane pass occupies residues 183 to 202; the sequence is RDSAIGGFIAAIILIGIATG. Residues 203–210 are Extracellular-facing; that stretch reads MIKANLSV. A helical membrane pass occupies residues 211-229; sequence LIADQLPKRKPSIKVLKSG. The Cytoplasmic portion of the chain corresponds to 230–267; it reads ERVIVDSNITLQNVFMFFYFMINVGSLSLMATTELEYH. A helical membrane pass occupies residues 268 to 287; it reads KGFWAAYLLPFCFFWIAVVT. Topologically, residues 288 to 294 are extracellular; sequence LIFGKKQ. Residues 295 to 316 form a helical membrane-spanning segment; the sequence is YIQRPIGDKVIAKSFKVCWILT. The Cytoplasmic segment spans residues 317–378; the sequence is KNKFDFNAAK…ISSFITQASM (62 aa). The helical transmembrane segment at 379 to 399 threads the bilayer; the sequence is MELHGIPNDFLQAFDSIALII. The Extracellular portion of the chain corresponds to 400–412; that stretch reads FIPIFEKFVYPFI. Residues 413–429 traverse the membrane as a helical segment; sequence RRYTPLKPITKIFFGFM. The Cytoplasmic segment spans residues 430–448; the sequence is FGSFAMTWAAVLQSFVYKA. The helical transmembrane segment at 449 to 466 threads the bilayer; sequence GPWYNEPLGHNTPNHVHV. Over 467-494 the chain is Extracellular; the sequence is CWQIPAYVLISFSEIFASITGLEYAYSK. A helical transmembrane segment spans residues 495–513; the sequence is APASMKSFIMSIFLLTNAF. Residues 514–526 lie on the Cytoplasmic side of the membrane; it reads GSAIGCALSPVTV. Residues 527-547 form a helical membrane-spanning segment; it reads DPKFTWLFTGLAVACFISGCL. Over 548-554 the chain is Extracellular; that stretch reads FWLCFRK. A helical membrane pass occupies residues 555–577; it reads YNDTEEEMNAMDYEEEDEFDLNP. The Cytoplasmic portion of the chain corresponds to 578-601; it reads ISAPKANDIEILEPMESLRSTTKY. Phosphoserine is present on serine 594.

This sequence belongs to the major facilitator superfamily. Proton-dependent oligopeptide transporter (POT/PTR) (TC 2.A.17) family.

The protein resides in the membrane. Uptake of small peptides. The sequence is that of Peptide transporter PTR2 (PTR2) from Saccharomyces cerevisiae (strain ATCC 204508 / S288c) (Baker's yeast).